Consider the following 181-residue polypeptide: Malignant T-cell-amplified sequence 1 (181 aa).

T81 is subject to Phosphothreonine; by MAPK1 and MAPK3. Residues 92 to 171 form the PUA domain; it reads LPHQQVDKGA…IGIENIHYLN (80 aa). S118 is subject to Phosphoserine; by CDK1.

It belongs to the MCTS1 family. As to quaternary structure, interacts (via PUA domain) with DENR; the complex regulates translation reinitiation. In terms of processing, phosphorylation is critical for stabilization and promotion of cell proliferation. In terms of tissue distribution, ubiquitous. Over-expressed in T-cell lymphoid cell lines and in non-Hodgkin lymphoma cell lines as well as in a subset of primary large B-cell lymphomas.

It is found in the cytoplasm. Functionally, translation regulator forming a complex with DENR to promote translation reinitiation. Translation reinitiation is the process where the small ribosomal subunit remains attached to the mRNA following termination of translation of a regulatory upstream ORF (uORF), and resume scanning on the same mRNA molecule to initiate translation of a downstream ORF, usually the main ORF (mORF). The MCTS1/DENR complex is pivotal to two linked mechanisms essential for translation reinitiation. Firstly, the dissociation of deacylated tRNAs from post-termination 40S ribosomal complexes during ribosome recycling. Secondly, the recruitment in an EIF2-independent manner of aminoacylated initiator tRNA to P site of 40S ribosomes for a new round of translation. This regulatory mechanism governs the translation of more than 150 genes which translation reinitiation is MCTS1/DENR complex-dependent. Consequently, modulates various unrelated biological processes including cell cycle regulation and DNA damage signaling and repair. Notably, it positively regulates interferon gamma immunity to mycobacteria by enhancing the translation of JAK2. The polypeptide is Malignant T-cell-amplified sequence 1 (MCTS1) (Homo sapiens (Human)).